We begin with the raw amino-acid sequence, 472 residues long: 3-isopropylmalate dehydratase large subunit (472 aa).

The [4Fe-4S] cluster site is built by Cys-347, Cys-407, and Cys-410.

The protein belongs to the aconitase/IPM isomerase family. LeuC type 1 subfamily. Heterodimer of LeuC and LeuD. [4Fe-4S] cluster serves as cofactor.

It catalyses the reaction (2R,3S)-3-isopropylmalate = (2S)-2-isopropylmalate. It functions in the pathway amino-acid biosynthesis; L-leucine biosynthesis; L-leucine from 3-methyl-2-oxobutanoate: step 2/4. In terms of biological role, catalyzes the isomerization between 2-isopropylmalate and 3-isopropylmalate, via the formation of 2-isopropylmaleate. The sequence is that of 3-isopropylmalate dehydratase large subunit from Opitutus terrae (strain DSM 11246 / JCM 15787 / PB90-1).